We begin with the raw amino-acid sequence, 229 residues long: Ribonuclease 3 (229 aa).

An RNase III domain is found at 5-127 (LNRLERKLGH…LIGAIYLDAG (123 aa)). Residue glutamate 40 participates in Mg(2+) binding. Residue aspartate 44 is part of the active site. Positions 113 and 116 each coordinate Mg(2+). Glutamate 116 is an active-site residue. The 71-residue stretch at 154-224 (DPKTRLQEFL…AAAALVALGV (71 aa)) folds into the DRBM domain.

Belongs to the ribonuclease III family. As to quaternary structure, homodimer. Mg(2+) is required as a cofactor.

The protein resides in the cytoplasm. The enzyme catalyses Endonucleolytic cleavage to 5'-phosphomonoester.. In terms of biological role, digests double-stranded RNA. Involved in the processing of primary rRNA transcript to yield the immediate precursors to the large and small rRNAs (23S and 16S). Processes some mRNAs, and tRNAs when they are encoded in the rRNA operon. Processes pre-crRNA and tracrRNA of type II CRISPR loci if present in the organism. The chain is Ribonuclease 3 from Azotobacter vinelandii (strain DJ / ATCC BAA-1303).